A 336-amino-acid polypeptide reads, in one-letter code: Galactinol synthase 6 (336 aa).

The active site involves Lys-106. Residues Asp-122, Asp-124, and His-260 each contribute to the Mn(2+) site.

This sequence belongs to the glycosyltransferase 8 family. Galactosyltransferase subfamily. A divalent metal cation is required as a cofactor.

It localises to the cytoplasm. The catalysed reaction is myo-inositol + UDP-alpha-D-galactose = alpha-D-galactosyl-(1-&gt;3)-1D-myo-inositol + UDP + H(+). In terms of biological role, galactinol synthase involved in the biosynthesis of raffinose family oligosaccharides (RFOs) that function as osmoprotectants. May promote plant stress tolerance. This is Galactinol synthase 6 (GOLS6) from Arabidopsis thaliana (Mouse-ear cress).